The sequence spans 347 residues: 3-isopropylmalate dehydrogenase (347 aa).

Residues R94, R104, R128, and D219 each coordinate substrate. Residues D219, D243, and D247 each contribute to the Mg(2+) site. NAD(+) is bound at residue 279–291 (GSAPDIAGQGKAD).

The protein belongs to the isocitrate and isopropylmalate dehydrogenases family. LeuB type 2 subfamily. In terms of assembly, homodimer. It depends on Mg(2+) as a cofactor. Mn(2+) is required as a cofactor.

It localises to the cytoplasm. The enzyme catalyses (2R,3S)-3-isopropylmalate + NAD(+) = 4-methyl-2-oxopentanoate + CO2 + NADH. It participates in amino-acid biosynthesis; L-leucine biosynthesis; L-leucine from 3-methyl-2-oxobutanoate: step 3/4. Its function is as follows. Catalyzes the oxidation of 3-carboxy-2-hydroxy-4-methylpentanoate (3-isopropylmalate) to 3-carboxy-4-methyl-2-oxopentanoate. The product decarboxylates to 4-methyl-2 oxopentanoate. This Streptomyces griseus subsp. griseus (strain JCM 4626 / CBS 651.72 / NBRC 13350 / KCC S-0626 / ISP 5235) protein is 3-isopropylmalate dehydrogenase.